A 358-amino-acid polypeptide reads, in one-letter code: MRDRLLAAEKVKAIDWRDDALYLLDQRVLPFEEVWHRYTTAEGVAEAIRTMVVRGAPAIGISAAYGAVLGARARIAEGGDWYPALEEDMQLLADSRPTAVNLFWALNRMRDRLMRVKDGDDPLVALEAESVAIHLSDREANLTMAQLGADLIRRHQGNLQTVLTHCNTGALATGGFGTALGVIRAAHLEGMIERVYADETRPWLQGSRLTAWELANEGIPVTLNADSAAAHLMRTKGITWVIVGADRITANGDVANKIGTYQLAVAAMHHGVRFMVVAPSSTIDMEMASGDDIIIEERDGRELLEVGGQRVGAQVEAFNPVFDVTPADLIDAIVTEKGIVERPDTARMAQLMSRKHLH.

Substrate-binding positions include 54 to 56, R96, and Q205; that span reads RGA. The active-site Proton donor is the D246. 256–257 lines the substrate pocket; sequence NK.

This sequence belongs to the eIF-2B alpha/beta/delta subunits family. MtnA subfamily.

It carries out the reaction 5-(methylsulfanyl)-alpha-D-ribose 1-phosphate = 5-(methylsulfanyl)-D-ribulose 1-phosphate. It participates in amino-acid biosynthesis; L-methionine biosynthesis via salvage pathway; L-methionine from S-methyl-5-thio-alpha-D-ribose 1-phosphate: step 1/6. Functionally, catalyzes the interconversion of methylthioribose-1-phosphate (MTR-1-P) into methylthioribulose-1-phosphate (MTRu-1-P). This is Methylthioribose-1-phosphate isomerase from Pseudomonas savastanoi pv. phaseolicola (strain 1448A / Race 6) (Pseudomonas syringae pv. phaseolicola (strain 1448A / Race 6)).